The chain runs to 192 residues: Orotate phosphoribosyltransferase (192 aa).

116–124 serves as a coordination point for 5-phospho-alpha-D-ribose 1-diphosphate; it reads EDIVTTGLS. The orotate site is built by T120 and R148.

The protein belongs to the purine/pyrimidine phosphoribosyltransferase family. PyrE subfamily. In terms of assembly, homodimer. The cofactor is Mg(2+).

The enzyme catalyses orotidine 5'-phosphate + diphosphate = orotate + 5-phospho-alpha-D-ribose 1-diphosphate. Its pathway is pyrimidine metabolism; UMP biosynthesis via de novo pathway; UMP from orotate: step 1/2. Catalyzes the transfer of a ribosyl phosphate group from 5-phosphoribose 1-diphosphate to orotate, leading to the formation of orotidine monophosphate (OMP). This chain is Orotate phosphoribosyltransferase, found in Bartonella tribocorum (strain CIP 105476 / IBS 506).